The following is a 569-amino-acid chain: Endonuclease/exonuclease/phosphatase family domain-containing protein 1 (569 aa).

Residue Gly2 is the site of N-myristoyl glycine attachment. A phosphoserine mark is found at Ser16 and Ser25. One can recognise a HhH domain in the interval 38–67 (ERLNINTATEEELMTLPGVTRAVARSIVEY). Phosphoserine is present on residues Ser106, Ser110, Ser160, and Ser173. Residues 200–224 (SRPPSTHTNGGLTFTAKPHPSPTSL) are disordered. The span at 202–211 (PPSTHTNGGL) shows a compositional bias: polar residues. Phosphothreonine is present on Thr265. The tract at residues 549 to 569 (VPRNGNGVTLEPSEANIKHER) is disordered.

The polypeptide is Endonuclease/exonuclease/phosphatase family domain-containing protein 1 (Eepd1) (Mus musculus (Mouse)).